The sequence spans 388 residues: UDP-N-acetylglucosamine--N-acetylmuramyl-(pentapeptide) pyrophosphoryl-undecaprenol N-acetylglucosamine transferase (388 aa).

Residues Thr-42–Gly-44, Asn-159, Arg-195, Ser-223, Ile-277, and Gln-322 each bind UDP-N-acetyl-alpha-D-glucosamine.

Belongs to the glycosyltransferase 28 family. MurG subfamily.

The protein resides in the cell inner membrane. The catalysed reaction is di-trans,octa-cis-undecaprenyl diphospho-N-acetyl-alpha-D-muramoyl-L-alanyl-D-glutamyl-meso-2,6-diaminopimeloyl-D-alanyl-D-alanine + UDP-N-acetyl-alpha-D-glucosamine = di-trans,octa-cis-undecaprenyl diphospho-[N-acetyl-alpha-D-glucosaminyl-(1-&gt;4)]-N-acetyl-alpha-D-muramoyl-L-alanyl-D-glutamyl-meso-2,6-diaminopimeloyl-D-alanyl-D-alanine + UDP + H(+). It participates in cell wall biogenesis; peptidoglycan biosynthesis. Functionally, cell wall formation. Catalyzes the transfer of a GlcNAc subunit on undecaprenyl-pyrophosphoryl-MurNAc-pentapeptide (lipid intermediate I) to form undecaprenyl-pyrophosphoryl-MurNAc-(pentapeptide)GlcNAc (lipid intermediate II). This chain is UDP-N-acetylglucosamine--N-acetylmuramyl-(pentapeptide) pyrophosphoryl-undecaprenol N-acetylglucosamine transferase, found in Albidiferax ferrireducens (strain ATCC BAA-621 / DSM 15236 / T118) (Rhodoferax ferrireducens).